A 192-amino-acid polypeptide reads, in one-letter code: Ribosomal RNA large subunit methyltransferase E (192 aa).

S-adenosyl-L-methionine contacts are provided by Gly48, Phe50, Asp67, Asp85, and Asp107. Lys147 (proton acceptor) is an active-site residue.

The protein belongs to the class I-like SAM-binding methyltransferase superfamily. RNA methyltransferase RlmE family.

It is found in the cytoplasm. It carries out the reaction uridine(2552) in 23S rRNA + S-adenosyl-L-methionine = 2'-O-methyluridine(2552) in 23S rRNA + S-adenosyl-L-homocysteine + H(+). Functionally, specifically methylates the uridine in position 2552 of 23S rRNA at the 2'-O position of the ribose in the fully assembled 50S ribosomal subunit. The polypeptide is Ribosomal RNA large subunit methyltransferase E (Borrelia garinii subsp. bavariensis (strain ATCC BAA-2496 / DSM 23469 / PBi) (Borreliella bavariensis)).